The sequence spans 397 residues: Elongation factor Tu (397 aa).

The region spanning 10 to 206 (KPHVNIGTIG…AVDQNIPEPQ (197 aa)) is the tr-type G domain. The G1 stretch occupies residues 19 to 26 (GHIDHGKT). Residue 19–26 (GHIDHGKT) participates in GTP binding. Threonine 26 serves as a coordination point for Mg(2+). Residues 62–66 (GITIS) form a G2 region. Residues 83-86 (DCPG) form a G3 region. GTP contacts are provided by residues 83 to 87 (DCPGH) and 138 to 141 (NKSD). A G4 region spans residues 138-141 (NKSD). Residues 176–178 (SAL) are G5.

Belongs to the TRAFAC class translation factor GTPase superfamily. Classic translation factor GTPase family. EF-Tu/EF-1A subfamily. As to quaternary structure, monomer.

Its subcellular location is the cytoplasm. It catalyses the reaction GTP + H2O = GDP + phosphate + H(+). GTP hydrolase that promotes the GTP-dependent binding of aminoacyl-tRNA to the A-site of ribosomes during protein biosynthesis. This chain is Elongation factor Tu, found in Thermobifida fusca (strain YX).